Consider the following 445-residue polypeptide: Argininosuccinate synthase (445 aa).

Residues 17–25 (AFSGGLDTS) and Ala43 contribute to the ATP site. Tyr99 contributes to the L-citrulline binding site. ATP contacts are provided by Gly129 and Thr131. 3 residues coordinate L-aspartate: Thr131, Asn135, and Asp136. Asn135 contributes to the L-citrulline binding site. Position 136 (Asp136) interacts with ATP. L-citrulline contacts are provided by Arg139 and Ser192. Asp194 is a binding site for ATP. The L-citrulline site is built by Thr201, Glu203, and Glu280.

Belongs to the argininosuccinate synthase family. Type 2 subfamily. As to quaternary structure, homotetramer.

It localises to the cytoplasm. It catalyses the reaction L-citrulline + L-aspartate + ATP = 2-(N(omega)-L-arginino)succinate + AMP + diphosphate + H(+). It participates in amino-acid biosynthesis; L-arginine biosynthesis; L-arginine from L-ornithine and carbamoyl phosphate: step 2/3. The chain is Argininosuccinate synthase from Ralstonia pickettii (strain 12J).